Here is a 309-residue protein sequence, read N- to C-terminus: Malate dehydrogenase (309 aa).

NAD(+) contacts are provided by residues 9–14 (GAGAVG) and Asp33. Substrate is bound by residues Arg82 and Arg88. NAD(+)-binding positions include Asn95 and 118–120 (VTN). Positions 120 and 151 each coordinate substrate. The active-site Proton acceptor is the His175.

Belongs to the LDH/MDH superfamily. MDH type 3 family.

It carries out the reaction (S)-malate + NAD(+) = oxaloacetate + NADH + H(+). Its function is as follows. Catalyzes the reversible oxidation of malate to oxaloacetate. In Thermomicrobium roseum (strain ATCC 27502 / DSM 5159 / P-2), this protein is Malate dehydrogenase.